Here is a 249-residue protein sequence, read N- to C-terminus: Uridylate kinase (249 aa).

21-24 (KLSG) contributes to the ATP binding site. Residue Gly-63 coordinates UMP. The ATP site is built by Gly-64 and Arg-68. Residues Asp-84 and 145 to 152 (TGNPFVTT) each bind UMP. ATP-binding residues include Thr-172, Tyr-178, and Asp-181.

It belongs to the UMP kinase family. In terms of assembly, homohexamer.

Its subcellular location is the cytoplasm. It catalyses the reaction UMP + ATP = UDP + ADP. Its pathway is pyrimidine metabolism; CTP biosynthesis via de novo pathway; UDP from UMP (UMPK route): step 1/1. Its activity is regulated as follows. Inhibited by UTP. Functionally, catalyzes the reversible phosphorylation of UMP to UDP. The sequence is that of Uridylate kinase from Francisella tularensis subsp. tularensis (strain FSC 198).